A 493-amino-acid polypeptide reads, in one-letter code: E3 ubiquitin-protein ligase TRIM35 (493 aa).

Met1 is subject to N-acetylmethionine. 2 positions are modified to phosphoserine: Ser4 and Ser8. The segment at 21–61 (CAVCYDPFRDAVTLRCGHNFCRGCVSRCWEVQVSPTCPVCK) adopts an RING-type zinc-finger fold. The B box-type zinc finger occupies 96 to 137 (RFSRVCRLHRGQLSLFCLEDKELLCCSCQADPRHQGHRVQPV). The Zn(2+) site is built by Cys101, His104, Cys123, and His129. A coiled-coil region spans residues 210 to 251 (AEETRQKQLLADEKMKQLTEETEVLAHEIERLQMEMKEDDVS). The region spanning 284-487 (LGSLQYRVWK…LRICPLHISV (204 aa)) is the B30.2/SPRY domain.

Belongs to the TRIM/RBCC family. Interacts with PKM isoform M2, but not isoform M1; this interaction may compete with that between PKM and FGFR1, and hence reduces FGFR1-dependent tyrosine phosphorylation of PKM. Interacts with IRF7; this interaction promotes IRF7 proteasomal degradation. Interacts with TRAF3; this interaction promotes TRAF3 activation.

The protein localises to the cytoplasm. It localises to the nucleus. The catalysed reaction is S-ubiquitinyl-[E2 ubiquitin-conjugating enzyme]-L-cysteine + [acceptor protein]-L-lysine = [E2 ubiquitin-conjugating enzyme]-L-cysteine + N(6)-ubiquitinyl-[acceptor protein]-L-lysine.. It functions in the pathway protein modification; protein ubiquitination. Functionally, E3 ubiquitin-protein ligase that participates in multiple biological processes including cell death, glucose metabolism, and in particular, the innate immune response. Mediates 'Lys-63'-linked polyubiquitination of TRAF3 thereby promoting type I interferon production via RIG-I signaling pathway. Can also catalyze 'Lys-48'-linked polyubiquitination and proteasomal degradation of viral proteins such as influenza virus PB2. Acts as a negative feedback regulator of TLR7- and TLR9-triggered signaling. Mechanistically, promotes the 'Lys-48'-linked ubiquitination of IRF7 and induces its degradation via a proteasome-dependent pathway. Reduces FGFR1-dependent tyrosine phosphorylation of PKM, inhibiting PKM-dependent lactate production, glucose metabolism, and cell growth. The sequence is that of E3 ubiquitin-protein ligase TRIM35 (TRIM35) from Homo sapiens (Human).